A 394-amino-acid chain; its full sequence is Elongation factor Tu 1 (394 aa).

In terms of domain architecture, tr-type G spans 10-204; sequence KPHVNVGTIG…ALDTYIPEPE (195 aa). A G1 region spans residues 19-26; sequence GHVDHGKT. Residue 19-26 coordinates GTP; sequence GHVDHGKT. Position 26 (T26) interacts with Mg(2+). The tract at residues 60–64 is G2; that stretch reads GITIS. Residues 81–84 form a G3 region; the sequence is DCPG. Residues 81 to 85 and 136 to 139 contribute to the GTP site; these read DCPGH and NKCD. The tract at residues 136–139 is G4; it reads NKCD. The G5 stretch occupies residues 174–176; the sequence is SAL.

The protein belongs to the TRAFAC class translation factor GTPase superfamily. Classic translation factor GTPase family. EF-Tu/EF-1A subfamily. As to quaternary structure, monomer.

The protein localises to the cytoplasm. The catalysed reaction is GTP + H2O = GDP + phosphate + H(+). Its function is as follows. GTP hydrolase that promotes the GTP-dependent binding of aminoacyl-tRNA to the A-site of ribosomes during protein biosynthesis. This Vibrio vulnificus (strain CMCP6) protein is Elongation factor Tu 1.